Consider the following 561-residue polypeptide: Putative transport protein YbjL (561 aa).

The next 5 membrane-spanning stretches (helical) occupy residues 8–28 (LLNGNYILLLFVVLALGLCLG), 32–52 (LGSIQLGNSIGVLVVSLLLGQ), 66–86 (FMLFIFCVGVEAGPNFFSIFF), 94–114 (MLALVMVGSALLIALGLGKLF), and 158–178 (NLSLGYALTYLIGLVSLIVGA). RCK C-terminal domains are found at residues 202 to 288 (LDTD…SFRN) and 292 to 373 (VFDR…RIGF). The next 5 membrane-spanning stretches (helical) occupy residues 383 to 403 (LLAFCAFFIIGLMIGMITFQF), 406 to 426 (FSFGMGNAAGLLFAGIMLGFM), 451 to 471 (VFMAGVGLSAGSGINNGLGAI), 475 to 495 (MLVAGLIVSLVPVVICFLFGA), and 540 to 560 (AIANVLLTLAGTIIVMVWPGL).

This sequence belongs to the AAE transporter (TC 2.A.81) family. YbjL subfamily.

Its subcellular location is the cell membrane. The sequence is that of Putative transport protein YbjL from Escherichia fergusonii (strain ATCC 35469 / DSM 13698 / CCUG 18766 / IAM 14443 / JCM 21226 / LMG 7866 / NBRC 102419 / NCTC 12128 / CDC 0568-73).